Reading from the N-terminus, the 259-residue chain is Ribosomal RNA small subunit methyltransferase J (259 aa).

Residues 101–102, 117–118, 153–154, and Asp-176 contribute to the S-adenosyl-L-methionine site; these read RD, ER, and SS.

It belongs to the methyltransferase superfamily. RsmJ family.

It is found in the cytoplasm. The catalysed reaction is guanosine(1516) in 16S rRNA + S-adenosyl-L-methionine = N(2)-methylguanosine(1516) in 16S rRNA + S-adenosyl-L-homocysteine + H(+). Functionally, specifically methylates the guanosine in position 1516 of 16S rRNA. The polypeptide is Ribosomal RNA small subunit methyltransferase J (Vibrio vulnificus (strain YJ016)).